The following is a 185-amino-acid chain: MGPERHLSGAPARMATVVLGGDTMGPERIFPNQTEELGHQGPSEGTGDWSSEEPEEEQEETGSGPAGYSYQPLNQDPEQEEVELAPVGDGDVVADIQDRIQALGLHLPDPPLESEDEDEEGATALNNHSSIPMDPEHVELVKRTMAGVSLPAPGVPAWAREISDAQWEDVVQKALQARQASPAWK.

Disordered stretches follow at residues M1 to G90 and G104 to D134. 2 stretches are compositionally biased toward acidic residues: residues S50–E60 and L112–G121. S114 is subject to Phosphoserine.

In terms of tissue distribution, highly expressed in testis.

Functionally, may play an important role in spermatogenesis and/or testis development. The sequence is that of Male-enhanced antigen 1 (MEA1) from Homo sapiens (Human).